Reading from the N-terminus, the 513-residue chain is E3 ubiquitin-protein ligase RNF25 (513 aa).

In terms of domain architecture, RWD spans 9 to 117 (SEIEVLQSIY…ERAKEILTDS (109 aa)). Zn(2+) is bound by residues Cys-124, Cys-127, Cys-142, His-144, His-147, Cys-150, Cys-187, and Cys-190. The segment at 124-191 (CVICLYDFKE…ELAVVCPVCR (68 aa)) adopts an RING-type; atypical zinc-finger fold. Positions 261–513 (NLSDTPGMTD…EKEFRKEGVL (253 aa)) are disordered. The span at 271–297 (SSGAESSQSLPSSSPDSTSTTQTSQNQ) shows a compositional bias: low complexity. 2 stretches are compositionally biased toward polar residues: residues 345–397 (SDKI…QDML) and 406–423 (EVSQ…QTIL). The segment covering 426–440 (GHPEREHVGRGDKRG) has biased composition (basic and acidic residues). Positions 482–498 (AGRGHRGGGAYRGGGRG) are enriched in gly residues. A compositionally biased stretch (basic and acidic residues) spans 501–513 (QRVEKEFRKEGVL).

Belongs to the RNF25 family.

The protein localises to the cytoplasm. The enzyme catalyses S-ubiquitinyl-[E2 ubiquitin-conjugating enzyme]-L-cysteine + [acceptor protein]-L-lysine = [E2 ubiquitin-conjugating enzyme]-L-cysteine + N(6)-ubiquitinyl-[acceptor protein]-L-lysine.. It participates in protein modification; protein ubiquitination. In terms of biological role, E3 ubiquitin-protein ligase that plays a key role in the RNF14-RNF25 translation quality control pathway, a pathway that takes place when a ribosome has stalled during translation, and which promotes ubiquitination and degradation of translation factors on stalled ribosomes. May also acts as a positive regulator of the Wnt signaling. In Danio rerio (Zebrafish), this protein is E3 ubiquitin-protein ligase RNF25.